Here is a 485-residue protein sequence, read N- to C-terminus: Velvet complex subunit B (485 aa).

In terms of domain architecture, Velvet spans Gly33–Ala459. A disordered region spans residues Val107–Arg353. Composition is skewed to polar residues over residues Ala134–Gln155, Arg234–His243, Ser267–Ser304, and Thr326–Ser341.

Belongs to the velvet family. VelB subfamily. Component of the heterotrimeric velvet complex composed of laeA, veA and velB; VeA acting as a bridging protein between laeA and velB. Forms a heterodimeric complex with vosA; the formation of the velB-vosA complex is light-dependent.

It is found in the nucleus. The protein resides in the cytoplasm. In terms of biological role, component of the velvet transcription factor complex that controls sexual/asexual developmental ratio in response to light, promoting sexual development in the darkness while stimulating asexual sporulation under illumination. The velvet complex acts as a global regulator for secondary metabolite gene expression. Component of the velB-VosA heterodimeric complex that plays a dual role in activating genes associated with spore maturation and repressing certain development-associated genes. The velB-VosA complex binds DNA through the DNA-binding domain of vosA that recognizes an 11-nucleotide consensus sequence 5'-CTGGCCGCGGC-3' consisting of two motifs in the promoters of key developmental regulatory genes. This Laccaria bicolor (strain S238N-H82 / ATCC MYA-4686) (Bicoloured deceiver) protein is Velvet complex subunit B.